The chain runs to 106 residues: A-type ATP synthase subunit F (106 aa).

Belongs to the V-ATPase F subunit family. In terms of assembly, has multiple subunits with at least A(3), B(3), C, D, E, F, H, I and proteolipid K(x).

Its subcellular location is the cell membrane. Functionally, component of the A-type ATP synthase that produces ATP from ADP in the presence of a proton gradient across the membrane. The sequence is that of A-type ATP synthase subunit F from Methanothermobacter thermautotrophicus (strain ATCC 29096 / DSM 1053 / JCM 10044 / NBRC 100330 / Delta H) (Methanobacterium thermoautotrophicum).